We begin with the raw amino-acid sequence, 118 residues long: Small ribosomal subunit protein uS13 (118 aa).

Residues 93 to 118 (KKLPVRGQRTKTNARTRKGPRKLMKK) are disordered.

It belongs to the universal ribosomal protein uS13 family. Part of the 30S ribosomal subunit. Forms a loose heterodimer with protein S19. Forms two bridges to the 50S subunit in the 70S ribosome.

Its function is as follows. Located at the top of the head of the 30S subunit, it contacts several helices of the 16S rRNA. In the 70S ribosome it contacts the 23S rRNA (bridge B1a) and protein L5 of the 50S subunit (bridge B1b), connecting the 2 subunits; these bridges are implicated in subunit movement. Contacts the tRNAs in the A and P-sites. The protein is Small ribosomal subunit protein uS13 of Buchnera aphidicola subsp. Baizongia pistaciae (strain Bp).